A 511-amino-acid polypeptide reads, in one-letter code: Trafficking protein particle complex subunit 13 homolog (511 aa).

It belongs to the TRAPPC13 family.

This is Trafficking protein particle complex subunit 13 homolog from Dictyostelium discoideum (Social amoeba).